Here is a 313-residue protein sequence, read N- to C-terminus: FAM172 family protein homolog Y75B8A.31 (313 aa).

The tract at residues 293-313 (VKSENSKESDDEAPKSKKICV) is disordered. Positions 296–307 (ENSKESDDEAPK) are enriched in basic and acidic residues.

Belongs to the FAM172 family.

The protein is FAM172 family protein homolog Y75B8A.31 of Caenorhabditis elegans.